Here is a 147-residue protein sequence, read N- to C-terminus: Transcriptional regulator MraZ (147 aa).

SpoVT-AbrB domains lie at 5 to 52 (NHPT…PMEE) and 81 to 124 (GQVV…NAEH).

Belongs to the MraZ family. Forms oligomers.

The protein localises to the cytoplasm. Its subcellular location is the nucleoid. This is Transcriptional regulator MraZ from Koribacter versatilis (strain Ellin345).